A 906-amino-acid chain; its full sequence is Valine--tRNA ligase (906 aa).

A 'HIGH' region motif is present at residues 43–53 (PNVTGSLHIGH). A 'KMSKS' region motif is present at residues 548-552 (KMSKS). Lysine 551 serves as a coordination point for ATP. The stretch at 842–905 (EKARLTKDIA…EAALSRLASV (64 aa)) forms a coiled coil.

It belongs to the class-I aminoacyl-tRNA synthetase family. ValS type 1 subfamily. In terms of assembly, monomer.

It localises to the cytoplasm. It catalyses the reaction tRNA(Val) + L-valine + ATP = L-valyl-tRNA(Val) + AMP + diphosphate. Functionally, catalyzes the attachment of valine to tRNA(Val). As ValRS can inadvertently accommodate and process structurally similar amino acids such as threonine, to avoid such errors, it has a 'posttransfer' editing activity that hydrolyzes mischarged Thr-tRNA(Val) in a tRNA-dependent manner. This chain is Valine--tRNA ligase, found in Caulobacter vibrioides (strain ATCC 19089 / CIP 103742 / CB 15) (Caulobacter crescentus).